Consider the following 48-residue polypeptide: DNA gyrase inhibitor YacG (48 aa).

Zn(2+) contacts are provided by C9, C12, C28, and C32.

It belongs to the DNA gyrase inhibitor YacG family. As to quaternary structure, interacts with GyrB. The cofactor is Zn(2+).

Inhibits all the catalytic activities of DNA gyrase by preventing its interaction with DNA. Acts by binding directly to the C-terminal domain of GyrB, which probably disrupts DNA binding by the gyrase. The sequence is that of DNA gyrase inhibitor YacG from Wigglesworthia glossinidia brevipalpis.